The following is a 476-amino-acid chain: Sulfate adenylyltransferase subunit 1 (476 aa).

The 216-residue stretch at 24 to 239 folds into the tr-type G domain; the sequence is KSLLRFLTCG…LLETVDVDHE (216 aa). Residues 33–40 are G1; the sequence is GSVDDGKS. Residue 33–40 participates in GTP binding; sequence GSVDDGKS. A G2 region spans residues 91–95; it reads GITID. The tract at residues 112 to 115 is G3; it reads DTPG. GTP contacts are provided by residues 112–116 and 167–170; these read DTPGH and NKMD. The segment at 167–170 is G4; the sequence is NKMD. Residues 205–207 are G5; it reads SAL.

Belongs to the TRAFAC class translation factor GTPase superfamily. Classic translation factor GTPase family. CysN/NodQ subfamily. Heterodimer composed of CysD, the smaller subunit, and CysN.

It catalyses the reaction sulfate + ATP + H(+) = adenosine 5'-phosphosulfate + diphosphate. It functions in the pathway sulfur metabolism; hydrogen sulfide biosynthesis; sulfite from sulfate: step 1/3. With CysD forms the ATP sulfurylase (ATPS) that catalyzes the adenylation of sulfate producing adenosine 5'-phosphosulfate (APS) and diphosphate, the first enzymatic step in sulfur assimilation pathway. APS synthesis involves the formation of a high-energy phosphoric-sulfuric acid anhydride bond driven by GTP hydrolysis by CysN coupled to ATP hydrolysis by CysD. The chain is Sulfate adenylyltransferase subunit 1 from Vibrio campbellii (strain ATCC BAA-1116).